Consider the following 180-residue polypeptide: Large ribosomal subunit protein uL6 (180 aa).

The segment at 158-180 (YSGKGISYKGEKIRRKEGKTASK) is disordered.

The protein belongs to the universal ribosomal protein uL6 family. In terms of assembly, part of the 50S ribosomal subunit.

Functionally, this protein binds to the 23S rRNA, and is important in its secondary structure. It is located near the subunit interface in the base of the L7/L12 stalk, and near the tRNA binding site of the peptidyltransferase center. This is Large ribosomal subunit protein uL6 from Mycoplasmopsis synoviae (strain 53) (Mycoplasma synoviae).